Here is a 188-residue protein sequence, read N- to C-terminus: F7-2 fimbrial protein (188 aa).

The signal sequence occupies residues 1–21 (MIKSVIAGAVAMAVVSFGAYA). A disulfide bridge links cysteine 43 with cysteine 82.

Belongs to the fimbrial protein family.

The protein localises to the fimbrium. Functionally, fimbriae (also called pili), polar filaments radiating from the surface of the bacterium to a length of 0.5-1.5 micrometers and numbering 100-300 per cell, enable bacteria to colonize the epithelium of specific host organs. The chain is F7-2 fimbrial protein (F7-2) from Escherichia coli O6:H1 (strain CFT073 / ATCC 700928 / UPEC).